The following is a 519-amino-acid chain: Exodeoxyribonuclease 7 large subunit (519 aa).

Residues 493 to 519 (AISTGKSSNTNRKSAPAREPGKQGSLF) form a disordered region. Positions 496–505 (TGKSSNTNRK) are enriched in polar residues.

The protein belongs to the XseA family. Heterooligomer composed of large and small subunits.

It is found in the cytoplasm. The enzyme catalyses Exonucleolytic cleavage in either 5'- to 3'- or 3'- to 5'-direction to yield nucleoside 5'-phosphates.. Bidirectionally degrades single-stranded DNA into large acid-insoluble oligonucleotides, which are then degraded further into small acid-soluble oligonucleotides. The polypeptide is Exodeoxyribonuclease 7 large subunit (Chelativorans sp. (strain BNC1)).